The chain runs to 282 residues: Ribosome biogenesis GTPase A (282 aa).

The CP-type G domain maps to 14-178 (RREVTEKLKL…LLDTPGILWP (165 aa)). Residues 58-61 (NKAD), 86-87 (NS), 130-135 (NVGKST), and Gly-174 each bind GTP.

It belongs to the TRAFAC class YlqF/YawG GTPase family. MTG1 subfamily. Interacts with ctc. Interacts with the immature 50S ribosome subunit. 2 molecules of rbgA bind to one 50S subunit.

It localises to the cytoplasm. Essential protein that is required for a late step of 50S ribosomal subunit assembly. Has GTPase activity that is stimulated by interaction with the immature 50S ribosome subunit. Binds to the 23S rRNA. Required for the association of ribosomal proteins rplP and rpmA with the large subunit. This is Ribosome biogenesis GTPase A from Bacillus pumilus (strain SAFR-032).